A 765-amino-acid polypeptide reads, in one-letter code: Protein transport protein Sec23A (765 aa).

T2 is subject to N-acetylthreonine. Zn(2+) contacts are provided by C61, C66, C85, and C88. T308 is subject to Phosphothreonine. One copy of the Gelsolin-like repeat lies at 632–718; the sequence is PEPVLLDSSS…EHGGSQARFL (87 aa).

Belongs to the SEC23/SEC24 family. SEC23 subfamily. COPII is composed of at least five proteins: the Sec23/24 complex, the Sec13/31 complex and Sar1. Interacts with SEC23IP. Interacts with HTR4. Interacts with SEC16A. Interacts with SLC6A4. Interacts (as part of the Sec23/24 complex) with SEC22B; recruits SEC22B into COPII-coated vesicles and allows the transport of this cargo from the endoplasmic reticulum to the Golgi. Interacts (via Gelsolin-like repeat) with MIA2 and MIA3; specifically involved in the transport of large cargos like the collagen COL7A1. Interacts with DDHD1. Interacts with TMEM39A. Interacts with SACM1L; this interaction is reduced in the absence of TMEM39A. Interacts with kinase FAM20C; transport of FAM20C from the endoplasmic reticulum to the Golgi is likely to be mediated by COPII vesicles.

The protein localises to the cytoplasmic vesicle. The protein resides in the COPII-coated vesicle membrane. It is found in the endoplasmic reticulum membrane. Its subcellular location is the cytoplasm. It localises to the cytosol. Component of the coat protein complex II (COPII) which promotes the formation of transport vesicles from the endoplasmic reticulum (ER). The coat has two main functions, the physical deformation of the endoplasmic reticulum membrane into vesicles and the selection of cargo molecules for their transport to the Golgi complex. Required for the translocation of insulin-induced glucose transporter SLC2A4/GLUT4 to the cell membrane. This is Protein transport protein Sec23A from Pongo abelii (Sumatran orangutan).